A 246-amino-acid chain; its full sequence is MADS-box protein EJ2 (246 aa).

The 61-residue stretch at 1–61 (MGRGRVELKR…GKLYEFCSTS (61 aa)) folds into the MADS-box domain. The K-box domain maps to 87-177 (TQNNYHEYLR…RRKLEESVAG (91 aa)).

It is found in the nucleus. MADS-box transcription factor that acts redundantly with J2 to control meristem maturation and inflorescence architecture. The chain is MADS-box protein EJ2 from Solanum lycopersicum (Tomato).